Here is a 224-residue protein sequence, read N- to C-terminus: Toxin coregulated pilin (224 aa).

Positions 1–25 are cleaved as a propeptide — atypical leader sequence; the sequence is MQLLKQLFKKKFVKEEHDKKTGQEG. The residue at position 26 (Met-26) is an N-methylmethionine. A helical membrane pass occupies residues 26–46; sequence MTLLEVIIVLGIMGVVSAGVV. Cys-145 and Cys-211 are disulfide-bonded.

The protein resides in the fimbrium. Its subcellular location is the membrane. In terms of biological role, major component of the toxin co-regulated pilus (tcp) which is a type IV pilus essential for bacterial aggregation and subsequent colonization in the host small intestine. This chain is Toxin coregulated pilin (tcpA), found in Vibrio cholerae serotype O1 (strain ATCC 39315 / El Tor Inaba N16961).